The primary structure comprises 233 residues: Phosphoribosylformylglycinamidine synthase subunit PurQ (233 aa).

The Glutamine amidotransferase type-1 domain maps to 9-233 (RIGIVTFPGS…LSGFLSAFSS (225 aa)). Cys92 acts as the Nucleophile in catalysis. Catalysis depends on residues His201 and Glu203.

In terms of assembly, part of the FGAM synthase complex composed of 1 PurL, 1 PurQ and 2 PurS subunits.

It localises to the cytoplasm. It catalyses the reaction N(2)-formyl-N(1)-(5-phospho-beta-D-ribosyl)glycinamide + L-glutamine + ATP + H2O = 2-formamido-N(1)-(5-O-phospho-beta-D-ribosyl)acetamidine + L-glutamate + ADP + phosphate + H(+). The catalysed reaction is L-glutamine + H2O = L-glutamate + NH4(+). Its pathway is purine metabolism; IMP biosynthesis via de novo pathway; 5-amino-1-(5-phospho-D-ribosyl)imidazole from N(2)-formyl-N(1)-(5-phospho-D-ribosyl)glycinamide: step 1/2. In terms of biological role, part of the phosphoribosylformylglycinamidine synthase complex involved in the purines biosynthetic pathway. Catalyzes the ATP-dependent conversion of formylglycinamide ribonucleotide (FGAR) and glutamine to yield formylglycinamidine ribonucleotide (FGAM) and glutamate. The FGAM synthase complex is composed of three subunits. PurQ produces an ammonia molecule by converting glutamine to glutamate. PurL transfers the ammonia molecule to FGAR to form FGAM in an ATP-dependent manner. PurS interacts with PurQ and PurL and is thought to assist in the transfer of the ammonia molecule from PurQ to PurL. The protein is Phosphoribosylformylglycinamidine synthase subunit PurQ of Frankia casuarinae (strain DSM 45818 / CECT 9043 / HFP020203 / CcI3).